Reading from the N-terminus, the 199-residue chain is MMQVLSIQNCATTKENPLSGKLIILTGPSGVGKGTLMRSLLQRHPELYYSVSATTRPPRPGEVNGESYYFVSRSKFEELIAQGEFLESAEFAGNYYGTPREAVLNQVQSGKLVVLEIELAGARQIRTSFPEALSIFILPPSFEELENRIRGRGQDSEEAIARRLQRAKEEIQAADEFDIQIVNDDFEAALQAIEVALFG.

Positions 20–198 (GKLIILTGPS…ALQAIEVALF (179 aa)) constitute a Guanylate kinase-like domain. 27–34 (GPSGVGKG) is a binding site for ATP.

The protein belongs to the guanylate kinase family.

The protein localises to the cytoplasm. The catalysed reaction is GMP + ATP = GDP + ADP. In terms of biological role, essential for recycling GMP and indirectly, cGMP. The sequence is that of Guanylate kinase from Nostoc sp. (strain PCC 7120 / SAG 25.82 / UTEX 2576).